The following is a 203-amino-acid chain: V-type ATP synthase subunit D (203 aa).

This sequence belongs to the V-ATPase D subunit family.

Functionally, produces ATP from ADP in the presence of a proton gradient across the membrane. The sequence is that of V-type ATP synthase subunit D from Streptococcus pneumoniae serotype 19F (strain G54).